A 203-amino-acid polypeptide reads, in one-letter code: Excretory canal abnormal exc-13 (203 aa).

An N-terminal signal peptide occupies residues 1 to 20 (MIGFLKFALIGTVLLGVANG). 3 N-linked (GlcNAc...) asparagine glycosylation sites follow: Asn-32, Asn-84, and Asn-188.

Belongs to the UPF0376 family.

It is found in the secreted. The chain is Excretory canal abnormal exc-13 from Caenorhabditis elegans.